A 456-amino-acid polypeptide reads, in one-letter code: Exodeoxyribonuclease 7 large subunit (456 aa).

Belongs to the XseA family. Heterooligomer composed of large and small subunits.

The protein resides in the cytoplasm. It catalyses the reaction Exonucleolytic cleavage in either 5'- to 3'- or 3'- to 5'-direction to yield nucleoside 5'-phosphates.. Functionally, bidirectionally degrades single-stranded DNA into large acid-insoluble oligonucleotides, which are then degraded further into small acid-soluble oligonucleotides. The protein is Exodeoxyribonuclease 7 large subunit of Escherichia coli (strain ATCC 8739 / DSM 1576 / NBRC 3972 / NCIMB 8545 / WDCM 00012 / Crooks).